We begin with the raw amino-acid sequence, 142 residues long: Hemoglobin subunit alpha (142 aa).

In terms of domain architecture, Globin spans 1–142 (VLSAADKNNV…VSTVLTSKYR (142 aa)). Ser3 is subject to Phosphoserine. N6-succinyllysine occurs at positions 7 and 11. Lys16 bears the N6-acetyllysine; alternate mark. Lys16 is modified (N6-succinyllysine; alternate). Tyr24 carries the post-translational modification Phosphotyrosine. Ser35 is modified (phosphoserine). The residue at position 40 (Lys40) is an N6-succinyllysine. His58 contacts O2. His87 lines the heme b pocket. A Phosphoserine modification is found at Ser102. Thr108 bears the Phosphothreonine mark. Residue Ser125 is modified to Phosphoserine. Thr135 and Thr138 each carry phosphothreonine. Ser139 is modified (phosphoserine).

Belongs to the globin family. Heterotetramer of two alpha chains and two beta chains. As to expression, red blood cells.

In terms of biological role, involved in oxygen transport from the lung to the various peripheral tissues. Its function is as follows. Hemopressin acts as an antagonist peptide of the cannabinoid receptor CNR1. Hemopressin-binding efficiently blocks cannabinoid receptor CNR1 and subsequent signaling. The polypeptide is Hemoglobin subunit alpha (HBA) (Procavia capensis habessinica (Abyssinian hyrax)).